We begin with the raw amino-acid sequence, 304 residues long: Glutaminase (304 aa).

The substrate site is built by S63, N113, E157, N164, Y188, Y240, and V258.

It belongs to the glutaminase family. As to quaternary structure, homotetramer.

It carries out the reaction L-glutamine + H2O = L-glutamate + NH4(+). The sequence is that of Glutaminase from Ralstonia nicotianae (strain ATCC BAA-1114 / GMI1000) (Ralstonia solanacearum).